Reading from the N-terminus, the 222-residue chain is Potassium-transporting ATPase KdpC subunit (222 aa).

Residues Trp-13 to Thr-35 traverse the membrane as a helical segment. Positions Thr-136–Ile-162 are disordered.

Belongs to the KdpC family. As to quaternary structure, the system is composed of three essential subunits: KdpA, KdpB and KdpC.

It is found in the cell membrane. Part of the high-affinity ATP-driven potassium transport (or Kdp) system, which catalyzes the hydrolysis of ATP coupled with the electrogenic transport of potassium into the cytoplasm. This subunit acts as a catalytic chaperone that increases the ATP-binding affinity of the ATP-hydrolyzing subunit KdpB by the formation of a transient KdpB/KdpC/ATP ternary complex. This Streptomyces avermitilis (strain ATCC 31267 / DSM 46492 / JCM 5070 / NBRC 14893 / NCIMB 12804 / NRRL 8165 / MA-4680) protein is Potassium-transporting ATPase KdpC subunit.